The primary structure comprises 183 residues: Caltractin ICL1c (183 aa).

The disordered stretch occupies residues M1 to E30. EF-hand domains follow at residues E39–E74, A75–E110, D112–T147, and M148–A183. Residues D52, D54, T56, S58, E63, D88, D90, S92, Q94, and E99 each contribute to the Ca(2+) site.

Belongs to the centrin family. Monomer.

It is found in the cytoplasm. The protein localises to the cytoskeleton. Functionally, plays a fundamental role in microtubule organizing center structure and function. Component of the infraciliary lattice (ICL) and the ciliary basal bodies. In Paramecium tetraurelia, this protein is Caltractin ICL1c (Icl1c).